Consider the following 834-residue polypeptide: Leucine--tRNA ligase (834 aa).

Residues 36 to 46 carry the 'HIGH' region motif; it reads PYPSGKIHVGH. Residues 602–606 carry the 'KMSKS' region motif; sequence KMSKS. Residue lysine 605 participates in ATP binding.

This sequence belongs to the class-I aminoacyl-tRNA synthetase family.

Its subcellular location is the cytoplasm. It catalyses the reaction tRNA(Leu) + L-leucine + ATP = L-leucyl-tRNA(Leu) + AMP + diphosphate. In Rickettsia canadensis (strain McKiel), this protein is Leucine--tRNA ligase.